Reading from the N-terminus, the 374-residue chain is Tomoregulin-2 (374 aa).

The N-terminal stretch at 1-39 is a signal peptide; the sequence is MVLWESPRQCSSWTLCEGFCWLLLLPVMLLIVARPVKLA. Residues 40 to 320 are Extracellular-facing; it reads AFPTSLSDCQ…VPGPVRFQYV (281 aa). The N-linked (GlcNAc...) asparagine glycan is linked to N55. 2 Kazal-like domains span residues 90-137 and 181-229; these read VCQF…SCAT and VCNI…RCQD. 9 disulfide bridges follow: C91-C121, C95-C114, C103-C135, C182-C213, C186-C206, C195-C227, C265-C278, C273-C289, and C291-C300. Residues 261-301 form the EGF-like domain; the sequence is HHIPCPEHYNGFCMHGKCEHSINMQEPSCRCDAGYTGQHCE. Residues 303-320 are required for shedding; it reads KDYSVLYVVPGPVRFQYV. A helical transmembrane segment spans residues 321–341; sequence LIAAVIGTIQIAVICVVVLCI. Residues 342 to 374 are Cytoplasmic-facing; that stretch reads TRKCPRSNRIHRQKQNTGHYSSDNTTRASTRLI. The segment at 353 to 374 is disordered; sequence RQKQNTGHYSSDNTTRASTRLI. Residues 356–374 are compositionally biased toward polar residues; sequence QNTGHYSSDNTTRASTRLI.

The protein belongs to the tomoregulin family. In terms of processing, O-glycosylated; contains chondroitin sulfate glycosaminoglycans. Post-translationally, a soluble form (TMEFF2-ECD) is produced by proteolytic shedding. This shedding can be induced by phorbol ester or pro-inflammatory cytokines such as TNFalpha, and is mediated by a metalloproteinase ADAM.

The protein localises to the membrane. Functionally, may be a survival factor for hippocampal and mesencephalic neurons. The shedded form may up-regulate cell proliferation. This chain is Tomoregulin-2 (TMEFF2), found in Bos taurus (Bovine).